Reading from the N-terminus, the 928-residue chain is Autophagy-related protein 9 (928 aa).

At 1–295 (MEQSGHEPGK…NGFHCIILQK (295 aa)) the chain is on the cytoplasmic side. Disordered regions lie at residues 28–118 (SIHT…PFGS) and 188–216 (NDVK…SSSN). A compositionally biased stretch (acidic residues) spans 77–86 (LESDTSEEDE). Residues 90-99 (GINSDSQVID) are compositionally biased toward polar residues. The segment covering 201 to 216 (SHNYNPTSTYTNSSSN) has biased composition (low complexity). The helical transmembrane segment at 296–316 (VLNILTLLFVVFVSSFMGYCV) threads the bilayer. The Lumenal segment spans residues 317–345 (DYSKLPTSTRFSEIKIDHCYSQNITGFTK). Residue Asn-339 is glycosylated (N-linked (GlcNAc...) asparagine). The helical transmembrane segment at 346–366 (FLLFLFYGFVILKVIQLYFDI) threads the bilayer. Over 367-507 (NNIREMKLFY…NELRKRFMLA (141 aa)) the chain is Cytoplasmic. An intramembrane segment occupies 508–528 (GFLNIILSPFLVSYFVLLYFF). At 529-588 (RYFNEYKTSPENIGARQYTPMAEWKFREYNELYHIFRKRIGLSNPLASKYVDQFPKEKTN) the chain is on the cytoplasmic side. Residues 589–609 (ILLKFVSFISGSFVAILAILA) form a helical membrane-spanning segment. At 610 to 625 (LWDPENFLNFEVTHDK) the chain is on the lumenal side. The chain crosses the membrane as a helical span at residues 626 to 646 (TVLFYITVLGAIWSISQGSVS). The Cytoplasmic portion of the chain corresponds to 647-692 (TEYHVFDPEETLRELAEYTHYLPDSWKDRYHTEGVKQEFCELYNLR). The stretch at 693–713 (ITVLLRELASLITTPFILWFS) is an intramembrane region. Residues 714–928 (LPNSAGKMVD…EYYKKSDVGR (215 aa)) lie on the Cytoplasmic side of the membrane. Positions 755–779 (FGTDGNETTEQDAATEEQDIDSEPD) are disordered. The span at 761–779 (ETTEQDAATEEQDIDSEPD) shows a compositional bias: acidic residues.

Belongs to the ATG9 family. Homotrimer; forms a homotrimer with a central pore that forms a path between the two membrane leaflets. Post-translationally, phosphorylated by ATG1. ATG1 phosphorylation is required for preautophagosome elongation.

The protein localises to the preautophagosomal structure membrane. It is found in the cytoplasmic vesicle membrane. The protein resides in the golgi apparatus membrane. Its subcellular location is the endoplasmic reticulum membrane. The catalysed reaction is a 1,2-diacyl-sn-glycero-3-phosphocholine(in) = a 1,2-diacyl-sn-glycero-3-phosphocholine(out). It carries out the reaction a 1,2-diacyl-sn-glycero-3-phospho-L-serine(in) = a 1,2-diacyl-sn-glycero-3-phospho-L-serine(out). The enzyme catalyses a 1,2-diacyl-sn-glycero-3-phosphoethanolamine(in) = a 1,2-diacyl-sn-glycero-3-phosphoethanolamine(out). It catalyses the reaction a 1,2-diacyl-sn-glycero-3-phospho-(1D-myo-inositol-3-phosphate)(in) = a 1,2-diacyl-sn-glycero-3-phospho-(1D-myo-inositol-3-phosphate)(out). Functionally, phospholipid scramblase involved in autophagy and cytoplasm to vacuole transport (Cvt) vesicle formation. Cycles between the preautophagosomal structure/phagophore assembly site (PAS) and the cytoplasmic vesicle pool and supplies membrane for the growing autophagosome. Lipid scramblase activity plays a key role in preautophagosomal structure/phagophore assembly by distributing the phospholipids that arrive through ATG2 from the cytoplasmic to the luminal leaflet of the bilayer, thereby driving autophagosomal membrane expansion. Required for mitophagy. Also involved in endoplasmic reticulum-specific autophagic process and is essential for the survival of cells subjected to severe ER stress. Different machineries are required for anterograde trafficking to the PAS during either the Cvt pathway or bulk autophagy and for retrograde trafficking. This is Autophagy-related protein 9 (ATG9) from Candida glabrata (strain ATCC 2001 / BCRC 20586 / JCM 3761 / NBRC 0622 / NRRL Y-65 / CBS 138) (Yeast).